A 265-amino-acid polypeptide reads, in one-letter code: Mlc titration factor A (265 aa).

Zn(2+)-binding residues include His111, His148, His152, and Glu211.

The protein belongs to the MtfA family. In terms of assembly, interacts with Mlc. It depends on Zn(2+) as a cofactor.

Its subcellular location is the cytoplasm. Its function is as follows. Involved in the modulation of the activity of the glucose-phosphotransferase system (glucose-PTS). Interacts with the transcriptional repressor Mlc, preventing its interaction with DNA and leading to the modulation of expression of genes regulated by Mlc, including ptsG, which encodes the PTS system glucose-specific EIICB component. Shows zinc-dependent metallopeptidase activity. The chain is Mlc titration factor A from Escherichia coli (strain 55989 / EAEC).